Reading from the N-terminus, the 228-residue chain is 7-cyano-7-deazaguanine synthase (228 aa).

9 to 19 (LSGGPDSTTVL) lines the ATP pocket. Zn(2+) contacts are provided by Cys193, Cys203, Cys206, and Cys209.

Belongs to the QueC family. The cofactor is Zn(2+).

It catalyses the reaction 7-carboxy-7-deazaguanine + NH4(+) + ATP = 7-cyano-7-deazaguanine + ADP + phosphate + H2O + H(+). Its pathway is purine metabolism; 7-cyano-7-deazaguanine biosynthesis. Its function is as follows. Catalyzes the ATP-dependent conversion of 7-carboxy-7-deazaguanine (CDG) to 7-cyano-7-deazaguanine (preQ(0)). This is 7-cyano-7-deazaguanine synthase from Rickettsia rickettsii (strain Iowa).